A 142-amino-acid polypeptide reads, in one-letter code: Large ribosomal subunit protein uL22c (142 aa).

The protein belongs to the universal ribosomal protein uL22 family. As to quaternary structure, part of the 50S ribosomal subunit.

It localises to the plastid. Its subcellular location is the chloroplast. Functionally, this protein binds specifically to 23S rRNA. In terms of biological role, the globular domain of the protein is located near the polypeptide exit tunnel on the outside of the subunit, while an extended beta-hairpin is found that lines the wall of the exit tunnel in the center of the 70S ribosome. In Oenothera parviflora (Small-flowered evening primrose), this protein is Large ribosomal subunit protein uL22c (rpl22).